We begin with the raw amino-acid sequence, 428 residues long: Beta-1,3-galactosyl-O-glycosyl-glycoprotein beta-1,6-N-acetylglucosaminyltransferase (428 aa).

Topologically, residues 1–9 are cytoplasmic; that stretch reads MLRNLFRRR. The interval 5 to 9 is mediates interaction with GOLPH3 and is necessary and sufficient for localization to the Golgi; the sequence is LFRRR. The helical; Signal-anchor for type II membrane protein transmembrane segment at 10-32 threads the bilayer; sequence LFSCPTKYYFMLLVLSLITFSVL. Residues 33 to 121 form a stem region region; it reads RIHQKPEFFS…EPLTKEEVGF (89 aa). Topologically, residues 33 to 428 are lumenal; that stretch reads RIHQKPEFFS…RHKALENLEH (396 aa). N-linked (GlcNAc...) asparagine glycosylation is found at asparagine 58 and asparagine 95. Disulfide bonds link cysteine 59/cysteine 413, cysteine 100/cysteine 172, cysteine 151/cysteine 199, and cysteine 372/cysteine 381. Residues 122 to 428 are catalytic; it reads PIAYSIVVHH…RHKALENLEH (307 aa). UDP-N-acetyl-alpha-D-glucosamine is bound by residues 128–130, 155–157, and tyrosine 187; these read VVH and DRK. Residues glutamate 243, asparagine 250, lysine 251, arginine 254, glutamate 320, lysine 341, and tyrosine 358 each contribute to the a glycoprotein site. The Nucleophile role is filled by glutamate 320. UDP-N-acetyl-alpha-D-glucosamine contacts are provided by arginine 378 and lysine 401.

It belongs to the glycosyltransferase 14 family. As to quaternary structure, interacts with GOLPH3; may control GCNT1 retention in the Golgi. Post-translationally, N-glycosylated. In terms of tissue distribution, expressed in kidney, liver, stomach, spleen, lung and brain.

The protein localises to the golgi apparatus membrane. The enzyme catalyses a 3-O-[beta-D-galactosyl-(1-&gt;3)-N-acetyl-alpha-D-galactosaminyl]-L-seryl-[protein] + UDP-N-acetyl-alpha-D-glucosamine = 3-O-{beta-D-galactosyl-(1-&gt;3)-[N-acetyl-beta-D-glucosaminyl-(1-&gt;6)]-N-acetyl-alpha-D-galactosaminyl}-L-seryl-[protein] + UDP + H(+). The catalysed reaction is a 3-O-[beta-D-galactosyl-(1-&gt;3)-N-acetyl-alpha-D-galactosaminyl]-L-threonyl-[protein] + UDP-N-acetyl-alpha-D-glucosamine = a 3-O-{beta-D-galactosyl-(1-&gt;3)-[N-acetyl-beta-D-glucosaminyl-(1-&gt;6)]-N-acetyl-alpha-D-galactosaminyl}-L-threonyl-[protein] + UDP + H(+). It carries out the reaction a globoside GalGb4Cer + UDP-N-acetyl-alpha-D-glucosamine = a globoside GlcNAc-(beta1-&gt;6)-GalGb4Cer + UDP + H(+). It catalyses the reaction a ganglioside GA1 + UDP-N-acetyl-alpha-D-glucosamine = a ganglioside beta-D-GlcNAc-(1-&gt;6)-GA1 + UDP + H(+). It functions in the pathway protein modification; protein glycosylation. The protein operates within glycolipid biosynthesis. With respect to regulation, inactivated by thiol-reactive agents. Inhibited by free UDP. Its function is as follows. Glycosyltransferase that catalyzes the transfer of an N-acetylglucosamine (GlcNAc) moiety in beta1-6 linkage from UDP-GlcNAc onto mucin-type core 1 O-glycan to form the branched mucin-type core 2 O-glycan. The catalysis is metal ion-independent and occurs with inversion of the anomeric configuration of sugar donor. Selectively involved in synthesis of mucin-type core 2 O-glycans that serve as scaffolds for the display of selectin ligand sialyl Lewis X epitope by myeloid cells, with an impact on homeostasis and recruitment to inflammatory sites. Can also act on glycolipid substrates. Transfers GlcNAc moiety to GalGb4Cer globosides in a reaction step to the synthesis of stage-specific embryonic antigen 1 (SSEA-1) determinant. Can use Galbeta1-3GalNAcalpha1-R and Galbeta1-3GalNAcbeta1-R oligosaccharide derivatives as acceptor substrates. The protein is Beta-1,3-galactosyl-O-glycosyl-glycoprotein beta-1,6-N-acetylglucosaminyltransferase (Gcnt1) of Mus musculus (Mouse).